Reading from the N-terminus, the 309-residue chain is Voltage-dependent anion channel-forming protein mll4386 (309 aa).

3 helical membrane passes run 32 to 52 (ILPQ…LARW), 58 to 78 (GVFN…YLSF), and 227 to 247 (IVCL…TPLF).

This sequence belongs to the anion channel-forming bestrophin (TC 1.A.46) family.

It localises to the cell membrane. The protein is Voltage-dependent anion channel-forming protein mll4386 of Mesorhizobium japonicum (strain LMG 29417 / CECT 9101 / MAFF 303099) (Mesorhizobium loti (strain MAFF 303099)).